The chain runs to 92 residues: Neurophysin 2 (92 aa).

Cystine bridges form between C10–C54, C13–C27, C21–C44, C28–C34, C61–C73, C67–C85, and C74–C79.

It belongs to the vasopressin/oxytocin family. There is an equilibrium between the monomeric and dimeric forms. On peptide binding the dimeric form predominates. In terms of processing, a shorter neurophysin molecule (1-90) also exists and is probably derived from the complete protein by proteolytic degradation (in vivo or after extraction).

It localises to the secreted. Its function is as follows. Neurophysin 2 specifically binds vasopressin. This chain is Neurophysin 2 (AVP), found in Loxodonta africana (African elephant).